The primary structure comprises 387 residues: DNA double-strand break repair protein Mre11 (387 aa).

Mn(2+) is bound by residues aspartate 11, histidine 13, aspartate 52, and aspartate 87. Histidine 88 functions as the Proton donor in the catalytic mechanism. Residues histidine 159, histidine 190, and histidine 192 each contribute to the Mn(2+) site.

Belongs to the MRE11/RAD32 family. In terms of assembly, homodimer. Forms a heterotetramer composed of two Mre11 subunits and two Rad50 subunits. Interacts with HerA. It depends on Mn(2+) as a cofactor.

Nuclease activity is regulated by Rad50. Functionally, part of the Rad50/Mre11 complex, which is involved in the early steps of DNA double-strand break (DSB) repair. The complex may facilitate opening of the processed DNA ends to aid in the recruitment of HerA and NurA. Mre11 binds to DSB ends and has both double-stranded 3'-5' exonuclease activity and single-stranded endonuclease activity. The chain is DNA double-strand break repair protein Mre11 from Sulfurisphaera tokodaii (strain DSM 16993 / JCM 10545 / NBRC 100140 / 7) (Sulfolobus tokodaii).